We begin with the raw amino-acid sequence, 316 residues long: 4-hydroxy-3-methylbut-2-enyl diphosphate reductase (316 aa).

A [4Fe-4S] cluster-binding site is contributed by C12. The (2E)-4-hydroxy-3-methylbut-2-enyl diphosphate site is built by H41 and H74. Residues H41 and H74 each coordinate dimethylallyl diphosphate. H41 and H74 together coordinate isopentenyl diphosphate. A [4Fe-4S] cluster-binding site is contributed by C96. H124 provides a ligand contact to (2E)-4-hydroxy-3-methylbut-2-enyl diphosphate. H124 provides a ligand contact to dimethylallyl diphosphate. An isopentenyl diphosphate-binding site is contributed by H124. E126 serves as the catalytic Proton donor. T169 is a (2E)-4-hydroxy-3-methylbut-2-enyl diphosphate binding site. C199 contacts [4Fe-4S] cluster. (2E)-4-hydroxy-3-methylbut-2-enyl diphosphate is bound by residues S227, S228, N229, and S271. The dimethylallyl diphosphate site is built by S227, S228, N229, and S271. Isopentenyl diphosphate contacts are provided by S227, S228, N229, and S271.

The protein belongs to the IspH family. The cofactor is [4Fe-4S] cluster.

The catalysed reaction is isopentenyl diphosphate + 2 oxidized [2Fe-2S]-[ferredoxin] + H2O = (2E)-4-hydroxy-3-methylbut-2-enyl diphosphate + 2 reduced [2Fe-2S]-[ferredoxin] + 2 H(+). The enzyme catalyses dimethylallyl diphosphate + 2 oxidized [2Fe-2S]-[ferredoxin] + H2O = (2E)-4-hydroxy-3-methylbut-2-enyl diphosphate + 2 reduced [2Fe-2S]-[ferredoxin] + 2 H(+). Its pathway is isoprenoid biosynthesis; dimethylallyl diphosphate biosynthesis; dimethylallyl diphosphate from (2E)-4-hydroxy-3-methylbutenyl diphosphate: step 1/1. It participates in isoprenoid biosynthesis; isopentenyl diphosphate biosynthesis via DXP pathway; isopentenyl diphosphate from 1-deoxy-D-xylulose 5-phosphate: step 6/6. Functionally, catalyzes the conversion of 1-hydroxy-2-methyl-2-(E)-butenyl 4-diphosphate (HMBPP) into a mixture of isopentenyl diphosphate (IPP) and dimethylallyl diphosphate (DMAPP). Acts in the terminal step of the DOXP/MEP pathway for isoprenoid precursor biosynthesis. The protein is 4-hydroxy-3-methylbut-2-enyl diphosphate reductase of Stenotrophomonas maltophilia (strain K279a).